The chain runs to 143 residues: Nucleoside diphosphate kinase (143 aa).

Positions 11, 59, 87, 93, 104, and 114 each coordinate ATP. H117 serves as the catalytic Pros-phosphohistidine intermediate.

It belongs to the NDK family. Homotetramer. Mg(2+) serves as cofactor.

It is found in the cytoplasm. The enzyme catalyses dZDP + ATP = dZTP + ADP. It carries out the reaction a 2'-deoxyribonucleoside 5'-diphosphate + ATP = a 2'-deoxyribonucleoside 5'-triphosphate + ADP. It catalyses the reaction a ribonucleoside 5'-diphosphate + ATP = a ribonucleoside 5'-triphosphate + ADP. The protein operates within purine metabolism. Major role in the synthesis of nucleoside triphosphates other than ATP. The ATP gamma phosphate is transferred to the NDP beta phosphate via a ping-pong mechanism, using a phosphorylated active-site intermediate. Its function is as follows. (Microbial infection) Catalyzes the phosphorylation of dZDP to dZTP, when the bacterium is infected by a phage that produces the substrate for the synthesis of dZTP (2- amino-2'-deoxyadenosine 5'-triphosphate), which is then used by the phage as a DNA polymerase substrate. The chain is Nucleoside diphosphate kinase from Acinetobacter baumannii (strain AB307-0294).